The primary structure comprises 530 residues: Chitin synthase 1 (530 aa).

A glycan (N-linked (GlcNAc...) asparagine) is linked at N17. The segment at Q22–R94 is disordered. The span at S24–E56 shows a compositional bias: polar residues. 3 N-linked (GlcNAc...) asparagine glycosylation sites follow: N118, N310, and N474. Transmembrane regions (helical) follow at residues F477–F497 and I508–L528.

It belongs to the chitin synthase family. Class II subfamily.

It localises to the cell membrane. The enzyme catalyses [(1-&gt;4)-N-acetyl-beta-D-glucosaminyl](n) + UDP-N-acetyl-alpha-D-glucosamine = [(1-&gt;4)-N-acetyl-beta-D-glucosaminyl](n+1) + UDP + H(+). Polymerizes chitin, a structural polymer of the cell wall and septum, by transferring the sugar moiety of UDP-GlcNAc to the non-reducing end of the growing chitin polymer. The chain is Chitin synthase 1 from Rhizopus delemar (strain RA 99-880 / ATCC MYA-4621 / FGSC 9543 / NRRL 43880) (Mucormycosis agent).